We begin with the raw amino-acid sequence, 105 residues long: Guanidinium exporter (105 aa).

A topological domain (cytoplasmic) is located at residue M1. The chain crosses the membrane as a helical span at residues 2-19; sequence SWIVLLIAGLLEVVWAIG. Over 20-28 the chain is Periplasmic; sequence LKYTHGFTR. Residues 29–48 traverse the membrane as a helical segment; the sequence is LTPSIITIAAMIVSIAMLSW. Over 49–54 the chain is Cytoplasmic; that stretch reads AMRTLP. Residues 55 to 77 form a helical membrane-spanning segment; that stretch reads VGTAYAVWTGIGAVGAAITGILL. Over 78–86 the chain is Periplasmic; the sequence is LGESASPAR. Residues 87–104 form a helical membrane-spanning segment; it reads LLSLGLIVAGIIGLKLST. Position 105 (H105) is a topological domain, cytoplasmic.

Belongs to the drug/metabolite transporter (DMT) superfamily. Small multidrug resistance (SMR) (TC 2.A.7.1) family. Gdx/SugE subfamily.

It is found in the cell inner membrane. Its function is as follows. Guanidinium ion exporter. Couples guanidinium export to the proton motive force, exchanging one guanidinium ion for two protons. The chain is Guanidinium exporter from Citrobacter freundii.